The chain runs to 152 residues: MKTPIELKILDSRIGTEFPLPAYATPGSAGMDLRAITDTQLVIQPGETVLIPTGIAIHVADPSLAAIILPRSGLGHKHGIVLGNLVGLIDSDYQGPLMVSCWNRGSEPFTIEIGDRLAQLVFVPVVQAEFKLVDEFNQSDRGAGGFGHSGTK.

Substrate is bound by residues 71–73, Asn84, 88–90, and Met98; these read RSG and LID.

Belongs to the dUTPase family. Mg(2+) serves as cofactor.

The catalysed reaction is dUTP + H2O = dUMP + diphosphate + H(+). It participates in pyrimidine metabolism; dUMP biosynthesis; dUMP from dCTP (dUTP route): step 2/2. Functionally, this enzyme is involved in nucleotide metabolism: it produces dUMP, the immediate precursor of thymidine nucleotides and it decreases the intracellular concentration of dUTP so that uracil cannot be incorporated into DNA. The polypeptide is Deoxyuridine 5'-triphosphate nucleotidohydrolase (Shewanella pealeana (strain ATCC 700345 / ANG-SQ1)).